We begin with the raw amino-acid sequence, 213 residues long: MSSDVLVTTPAQRQTEPHAEAVSRNRRQQATFRKVLAAAMATLREKSYADLTVRLVAARAKVAPATAYTYFSSKNHLIAEVYLDLVRQVPCVTDVNVPMPIRVTSSLRHLALVVADEPEIGAACTAALLDGGADPAVRAVRDRIGAEIHRRITSAIGPGADPGTVFALEMAFFGALVQAGSGTFTYHEIADRLGYVVGLILAGANEPSTGGSE.

Polar residues predominate over residues 1–14; sequence MSSDVLVTTPAQRQ. Residues 1–26 are disordered; sequence MSSDVLVTTPAQRQTEPHAEAVSRNR. The HTH tetR-type domain maps to 29–89; it reads QATFRKVLAA…EVYLDLVRQV (61 aa).

This is an uncharacterized protein from Mycobacterium tuberculosis (strain CDC 1551 / Oshkosh).